The primary structure comprises 78 residues: UPF0369 protein RP167 (78 aa).

The protein belongs to the SDHAF4 family.

The sequence is that of UPF0369 protein RP167 from Rickettsia prowazekii (strain Madrid E).